Reading from the N-terminus, the 861-residue chain is Leucine--tRNA ligase (861 aa).

The 'HIGH' region motif lies at 42-52 (PYPSGRLHMGH). A 'KMSKS' region motif is present at residues 619–623 (KMSKS). K622 is an ATP binding site.

It belongs to the class-I aminoacyl-tRNA synthetase family.

It localises to the cytoplasm. It catalyses the reaction tRNA(Leu) + L-leucine + ATP = L-leucyl-tRNA(Leu) + AMP + diphosphate. The protein is Leucine--tRNA ligase of Haemophilus influenzae (strain 86-028NP).